The primary structure comprises 211 residues: Uridine kinase (211 aa).

An ATP-binding site is contributed by 13-20 (GGTASGKT).

Belongs to the uridine kinase family.

The protein localises to the cytoplasm. It carries out the reaction uridine + ATP = UMP + ADP + H(+). The enzyme catalyses cytidine + ATP = CMP + ADP + H(+). It participates in pyrimidine metabolism; CTP biosynthesis via salvage pathway; CTP from cytidine: step 1/3. The protein operates within pyrimidine metabolism; UMP biosynthesis via salvage pathway; UMP from uridine: step 1/1. This Thermus thermophilus (strain ATCC BAA-163 / DSM 7039 / HB27) protein is Uridine kinase.